The primary structure comprises 381 residues: Arf-GAP with dual PH domain-containing protein 2 (381 aa).

An Arf-GAP domain is found at 9–132 (KRLLELLQAA…TAIDKAVSHP (124 aa)). The segment at 25-48 (CADCGAADPDWASYKLGIFICLHC) adopts a C4-type zinc-finger fold. PH domains are found at residues 132–233 (PGNR…AARL) and 255–361 (NYLK…GVLS).

Its subcellular location is the cytoplasm. It localises to the cell membrane. Its function is as follows. GTPase-activating protein for the ADP ribosylation factor family (Potential). Binds phosphatidylinositol 3,4,5-trisphosphate (PtdInsP3) and inositol 1,3,4,5-tetrakisphosphate (InsP4). Possesses a stoichiometry of two binding sites for InsP4 with identical affinity. This Mus musculus (Mouse) protein is Arf-GAP with dual PH domain-containing protein 2 (Adap2).